The sequence spans 253 residues: NAD(P)H-quinone oxidoreductase subunit K (253 aa).

Residues Cys68, Cys69, Cys133, and Cys164 each coordinate [4Fe-4S] cluster.

This sequence belongs to the complex I 20 kDa subunit family. As to quaternary structure, NDH-1 can be composed of about 15 different subunits; different subcomplexes with different compositions have been identified which probably have different functions. The cofactor is [4Fe-4S] cluster.

Its subcellular location is the cellular thylakoid membrane. It catalyses the reaction a plastoquinone + NADH + (n+1) H(+)(in) = a plastoquinol + NAD(+) + n H(+)(out). The enzyme catalyses a plastoquinone + NADPH + (n+1) H(+)(in) = a plastoquinol + NADP(+) + n H(+)(out). Functionally, NDH-1 shuttles electrons from an unknown electron donor, via FMN and iron-sulfur (Fe-S) centers, to quinones in the respiratory and/or the photosynthetic chain. The immediate electron acceptor for the enzyme in this species is believed to be plastoquinone. Couples the redox reaction to proton translocation, and thus conserves the redox energy in a proton gradient. Cyanobacterial NDH-1 also plays a role in inorganic carbon-concentration. The chain is NAD(P)H-quinone oxidoreductase subunit K from Synechococcus sp. (strain CC9311).